A 359-amino-acid polypeptide reads, in one-letter code: Protein-glutamate methylesterase/protein-glutamine glutaminase 2 (359 aa).

A Response regulatory domain is found at 6–123 (KVMIVDDSAL…KSFLEDASND (118 aa)). Position 57 is a 4-aspartylphosphate (D57). A CheB-type methylesterase domain is found at 167-359 (ERTTDQLVAI…GAIVGYGKSC (193 aa)). Residues S179, H205, and D301 contribute to the active site.

Belongs to the CheB family. In terms of processing, phosphorylated by CheA. Phosphorylation of the N-terminal regulatory domain activates the methylesterase activity.

The protein localises to the cytoplasm. It catalyses the reaction [protein]-L-glutamate 5-O-methyl ester + H2O = L-glutamyl-[protein] + methanol + H(+). The enzyme catalyses L-glutaminyl-[protein] + H2O = L-glutamyl-[protein] + NH4(+). In terms of biological role, involved in chemotaxis. Part of a chemotaxis signal transduction system that modulates chemotaxis in response to various stimuli. Catalyzes the demethylation of specific methylglutamate residues introduced into the chemoreceptors (methyl-accepting chemotaxis proteins or MCP) by CheR. Also mediates the irreversible deamidation of specific glutamine residues to glutamic acid. This Dechloromonas aromatica (strain RCB) protein is Protein-glutamate methylesterase/protein-glutamine glutaminase 2.